We begin with the raw amino-acid sequence, 427 residues long: MAEGEDVGWWRSWLQQSYQAVKEKSTEALEFMKRDLTEFTQVVQHDTACTIAATASVVKEKLATEGSSGATEKVKKGLSDFLGVISDTFAPSPDKTIDCDVITLMGTPSGTAEPYDGTKARLYSLQSDPATYCNEPDGPPELFDAWLSEFCLEEKKGEISELLVGSPSIRALYTKMVPAAVSHSEFWHRYFYKVHQLEQEQARRDALKQRADQSISEEPGWEEEEEELEGIVPSPKEAKIPKETKTTTSPEDEPAPQSPCEETPVEPPAEATPSESSESISLVTQVANPAAAPEAPELPKDLSQKLFEASLEEQSLAEDEGETGPPPPPPSKPLTPAGRASGPEPRPPARVETLREEVPTDLRVFELNSDSGKSTPSNNGKKGSSTDISEDWEKDFDLDMTEEEVQMALSKVDASGELEDVEWEDWE.

Residues serine 92 and serine 166 each carry the phosphoserine modification. Residues 146–198 (WLSEFCLEEKKGEISELLVGSPSIRALYTKMVPAAVSHSEFWHRYFYKVHQLE) enclose the BSD domain. The tract at residues 208–397 (KQRADQSISE…ISEDWEKDFD (190 aa)) is disordered. Residues 219-229 (PGWEEEEEELE) are compositionally biased toward acidic residues. Residues 236 to 245 (KEAKIPKETK) are compositionally biased toward basic and acidic residues. The segment covering 268 to 279 (PAEATPSESSES) has biased composition (low complexity). Residues 324 to 333 (GPPPPPPSKP) show a composition bias toward pro residues. Residues 347 to 364 (PPARVETLREEVPTDLRV) show a composition bias toward basic and acidic residues. Phosphothreonine is present on threonine 353. Over residues 368–387 (NSDSGKSTPSNNGKKGSSTD) the composition is skewed to polar residues. A phosphoserine mark is found at serine 384 and serine 385. Over residues 388–397 (ISEDWEKDFD) the composition is skewed to acidic residues. Phosphoserine is present on serine 415.

The sequence is that of BSD domain-containing protein 1 (Bsdc1) from Mus musculus (Mouse).